The primary structure comprises 256 residues: 3-dehydroquinate dehydratase (256 aa).

Residues S19, 38–40, and R68 contribute to the 3-dehydroquinate site; that span reads EIR. The active-site Proton donor/acceptor is the H122. K147 acts as the Schiff-base intermediate with substrate in catalysis. The 3-dehydroquinate site is built by R185, T204, and Q208.

Belongs to the type-I 3-dehydroquinase family. Homodimer.

It carries out the reaction 3-dehydroquinate = 3-dehydroshikimate + H2O. It participates in metabolic intermediate biosynthesis; chorismate biosynthesis; chorismate from D-erythrose 4-phosphate and phosphoenolpyruvate: step 3/7. Functionally, involved in the third step of the chorismate pathway, which leads to the biosynthesis of aromatic amino acids. Catalyzes the cis-dehydration of 3-dehydroquinate (DHQ) and introduces the first double bond of the aromatic ring to yield 3-dehydroshikimate. This Methanospirillum hungatei JF-1 (strain ATCC 27890 / DSM 864 / NBRC 100397 / JF-1) protein is 3-dehydroquinate dehydratase.